Reading from the N-terminus, the 406-residue chain is 2,3-bisphosphoglycerate-independent phosphoglycerate mutase (406 aa).

Positions Val-164 to Asp-184 are disordered.

It belongs to the BPG-independent phosphoglycerate mutase family. A-PGAM subfamily.

It carries out the reaction (2R)-2-phosphoglycerate = (2R)-3-phosphoglycerate. It functions in the pathway carbohydrate degradation; glycolysis; pyruvate from D-glyceraldehyde 3-phosphate: step 3/5. Catalyzes the interconversion of 2-phosphoglycerate and 3-phosphoglycerate. This is 2,3-bisphosphoglycerate-independent phosphoglycerate mutase from Methanocorpusculum labreanum (strain ATCC 43576 / DSM 4855 / Z).